The following is an 83-amino-acid chain: Small integral membrane protein 10 (83 aa).

Residues 64–82 (FFYFYILASVILNVHLQVY) form a helical membrane-spanning segment.

The protein localises to the membrane. The polypeptide is Small integral membrane protein 10 (SMIM10) (Homo sapiens (Human)).